The sequence spans 405 residues: MNKFLKYFLILLALVLIVVPIVFATLLFKTSQDAFESSQDSKNANRQSNLRDNKVNPEEQPISILFLGIDDNDGRRKKGQDAEHSRSDAMILTTFNQSKHQIRMLSIPRDTISYIPKVGYYDKITHAHAYGGPIAAMDSVEATMNVPVDYYVRVNMKAFVEAVNELGGIYYDVPYDLNEPNTDDTGKIKIKKGYQKLNGDEALAVARTRHHDSDLKRGQRQMELIKILFQKAQEVDSIDKLDNVIQIVGKNAKHNLTNSEIKALAKMYLTNDVEIKTAQLKGKDDMLNGIYYYHPSVESIQKYANLLRKDLELSPINDKNDFLDQRVINHYGSLIPLTPLDNSLLRKEQNDTTDKDKTSNENSDSTNNSDSSNQQQPATDQNSNQNQGGTQQAPQASNNQNGVVN.

A signal peptide spans 1 to 34 (MNKFLKYFLILLALVLIVVPIVFATLLFKTSQDA). Residues 348–359 (EQNDTTDKDKTS) show a composition bias toward basic and acidic residues. The disordered stretch occupies residues 348–405 (EQNDTTDKDKTSNENSDSTNNSDSSNQQQPATDQNSNQNQGGTQQAPQASNNQNGVVN). Composition is skewed to low complexity over residues 360–373 (NENS…DSSN) and 381–392 (QNSNQNQGGTQQ). Residues 393–405 (APQASNNQNGVVN) show a composition bias toward polar residues.

The protein belongs to the LytR/CpsA/Psr (LCP) family.

This is an uncharacterized protein from Staphylococcus aureus (strain NCTC 8325 / PS 47).